Reading from the N-terminus, the 307-residue chain is Inner spore coat protein H-like protein (307 aa).

This sequence belongs to the CotH family.

It localises to the spore coat. Involved in the assembly of several proteins in the inner and outer layer of the spore coat. The chain is Inner spore coat protein H-like protein (yisJ) from Bacillus subtilis (strain 168).